A 247-amino-acid polypeptide reads, in one-letter code: Phosphoribosylaminoimidazole-succinocarboxamide synthase (247 aa).

This sequence belongs to the SAICAR synthetase family.

It carries out the reaction 5-amino-1-(5-phospho-D-ribosyl)imidazole-4-carboxylate + L-aspartate + ATP = (2S)-2-[5-amino-1-(5-phospho-beta-D-ribosyl)imidazole-4-carboxamido]succinate + ADP + phosphate + 2 H(+). Its pathway is purine metabolism; IMP biosynthesis via de novo pathway; 5-amino-1-(5-phospho-D-ribosyl)imidazole-4-carboxamide from 5-amino-1-(5-phospho-D-ribosyl)imidazole-4-carboxylate: step 1/2. This Methanopyrus kandleri (strain AV19 / DSM 6324 / JCM 9639 / NBRC 100938) protein is Phosphoribosylaminoimidazole-succinocarboxamide synthase.